The chain runs to 241 residues: MSQVKYNRIILKISGEALAGDKGNGINPTVIGHLANEIKSVHDLGVEIGIVCGGGNMWRGETGAKLGMERAQADYMGMLATIMNGLALQDGLEKVGVPTRMQTSIEMRQIAEPYIRRRALRHLEKGRVVIFGGGTGNPYFSTDTTAALRAAEIGADVILMAKNGVDGIYSADPKTDPSATKFAELTQLDLISKDLKVMDRTASSLSMDTEIPLIVFNVNTPGNIKKVVMGENIGTVIRGDK.

12 to 15 contributes to the ATP binding site; it reads KISG. The segment at 20–25 is involved in allosteric activation by GTP; the sequence is GDKGNG. A UMP-binding site is contributed by Gly-54. Positions 55 and 59 each coordinate ATP. UMP contacts are provided by residues Asp-74 and 135–142; that span reads TGNPYFST. 3 residues coordinate ATP: Asn-163, Tyr-169, and Asp-172.

It belongs to the UMP kinase family. Homohexamer.

It is found in the cytoplasm. It carries out the reaction UMP + ATP = UDP + ADP. It participates in pyrimidine metabolism; CTP biosynthesis via de novo pathway; UDP from UMP (UMPK route): step 1/1. With respect to regulation, allosterically activated by GTP. Inhibited by UTP. In terms of biological role, catalyzes the reversible phosphorylation of UMP to UDP. The chain is Uridylate kinase from Lactobacillus acidophilus (strain ATCC 700396 / NCK56 / N2 / NCFM).